We begin with the raw amino-acid sequence, 715 residues long: Fatty acid oxidation complex subunit alpha (715 aa).

Residues 1-190 (MTTTSAFMLN…KAGLVDDVVP (190 aa)) are enoyl-CoA hydratase. A 3-hydroxyacyl-CoA dehydrogenase region spans residues 306-715 (GPLNSVGILG…WTNGETDQGN (410 aa)).

It in the N-terminal section; belongs to the enoyl-CoA hydratase/isomerase family. The protein in the central section; belongs to the 3-hydroxyacyl-CoA dehydrogenase family. In terms of assembly, heterotetramer of two alpha chains (FadJ) and two beta chains (FadI).

It localises to the cytoplasm. The catalysed reaction is a (3S)-3-hydroxyacyl-CoA = a (2E)-enoyl-CoA + H2O. The enzyme catalyses a 4-saturated-(3S)-3-hydroxyacyl-CoA = a (3E)-enoyl-CoA + H2O. It carries out the reaction a (3S)-3-hydroxyacyl-CoA + NAD(+) = a 3-oxoacyl-CoA + NADH + H(+). It catalyses the reaction (3S)-3-hydroxybutanoyl-CoA = (3R)-3-hydroxybutanoyl-CoA. It participates in lipid metabolism; fatty acid beta-oxidation. Catalyzes the formation of a hydroxyacyl-CoA by addition of water on enoyl-CoA. Also exhibits 3-hydroxyacyl-CoA epimerase and 3-hydroxyacyl-CoA dehydrogenase activities. The chain is Fatty acid oxidation complex subunit alpha from Salmonella agona (strain SL483).